The chain runs to 475 residues: MSPQTETKASVGFKAGVKDYKLTYYTPDYQTKDTDILAAFRVTPQPGVPPEEAGAAVAAESSTGTWTTVWTDGLTSLDRYKGRCYGIEPVPGEESQFIAYVAYPLDLFEEGSVTNMFTSIVGNVFGFKALRALRLEDLRIPPAYIKTFQGPPHGIQVERDKLNKYGRPLLGCTIKPKLGLSAKNYGRAVYECLRGGLDFTKDDENVNSQPFMRWRDRFLFCAEAIYKAQAETGEIKGHYLNATAGTCEEMIKRAVFARELGAPIIMHDYLTGGFTANTSLAHYCRDNGLLLHIHRAMHAVIDRQKNHGMHFRVLAKALRLSGGDHIHAGTVVGKLEGERDITLGFVDLLRDEFVEKDRSRGIFFTQDWVSLPGVLPVASGGIHVWHMPALTEIFGDDSVLQFGGGTLGHPWGNAPGAVANRVALEACVQARNEGRDLAREGNEIIREASKWSPELAAACEVWKEIKFEFPAVDTI.

The propeptide occupies methionine 1–serine 2. Proline 3 carries the post-translational modification N-acetylproline. The residue at position 14 (lysine 14) is an N6,N6,N6-trimethyllysine. The substrate site is built by asparagine 123 and threonine 173. The active-site Proton acceptor is the lysine 175. A substrate-binding site is contributed by lysine 177. Mg(2+) is bound by residues lysine 201, aspartate 203, and glutamate 204. An N6-carboxylysine modification is found at lysine 201. Histidine 294 functions as the Proton acceptor in the catalytic mechanism. The substrate site is built by arginine 295, histidine 327, and serine 379.

Belongs to the RuBisCO large chain family. Type I subfamily. As to quaternary structure, heterohexadecamer of 8 large chains and 8 small chains; disulfide-linked. The disulfide link is formed within the large subunit homodimers. Mg(2+) serves as cofactor. In terms of processing, the disulfide bond which can form in the large chain dimeric partners within the hexadecamer appears to be associated with oxidative stress and protein turnover.

It is found in the plastid. It localises to the chloroplast. The catalysed reaction is 2 (2R)-3-phosphoglycerate + 2 H(+) = D-ribulose 1,5-bisphosphate + CO2 + H2O. The enzyme catalyses D-ribulose 1,5-bisphosphate + O2 = 2-phosphoglycolate + (2R)-3-phosphoglycerate + 2 H(+). RuBisCO catalyzes two reactions: the carboxylation of D-ribulose 1,5-bisphosphate, the primary event in carbon dioxide fixation, as well as the oxidative fragmentation of the pentose substrate in the photorespiration process. Both reactions occur simultaneously and in competition at the same active site. This is Ribulose bisphosphate carboxylase large chain from Carica papaya (Papaya).